A 667-amino-acid polypeptide reads, in one-letter code: MADIQSRVDELHRLLNQYSYEYYVKDNPSVPDSEYDKLLHELIDIETQHPEYRTADSPTVRVGGSAQSTFEKVNHDTPMLSLGNAFNEEDLRKFDQRIRDNIGNVEYMCELKIDGLAVSLKYENGRFVQGLTRGDGTTGEDITENLKTIHAIPLKINESRTFEVRGEAYMPRKSFVNLNEAKAANEEQPFANPRNAAAGSLRQLDSKLAAKRKLSVFLYSVNDFTQFNADTQSEALDELDQLGFKTNQERQRVQTIEEVMTYIDKWTKQRENLPYDIDGIVIKVNALEQQETLGFTQKSPRWAIAYKFPAEEVVTELLDIELSIGRTGVVTPTAVLEPVRVAGTTVSRASLHNEDLIHDKDIRIGDSVVIKKAGDIIPEVIKSVLDRRPDDAEIYHMPSHCPSCEHELVRIEGEVALRCINPKCQAQLVEGLIHFVSRQAMNIDGLGTKIIQQLYENEKIKDVADIFYLTKEDLLPLDRMGEKKVDNLLNAIEKAKSNSLEQLLFGLGIRHLGVKASQVIAEKYGTIDELFHVTEEALMDIHDVGHKLAQSVVTYLENEDIRALIDKLKAKNVNMIYKGVKTTELEGHPDFKDKTIVLTGKLYQMTRNEASNWLALQGAKVTNSVTKNTDLVIAGEDAGSKLAKAEKFGTEIWSEEAFVQKQNEIEG.

NAD(+) is bound by residues 32–36 (DSEYD), 81–82 (SL), and glutamate 110. Catalysis depends on lysine 112, which acts as the N6-AMP-lysine intermediate. Residues arginine 133, glutamate 167, lysine 283, and lysine 307 each contribute to the NAD(+) site. Positions 401, 404, 419, and 424 each coordinate Zn(2+). The BRCT domain occupies 586-667 (EGHPDFKDKT…FVQKQNEIEG (82 aa)).

This sequence belongs to the NAD-dependent DNA ligase family. LigA subfamily. It depends on Mg(2+) as a cofactor. Mn(2+) serves as cofactor.

It catalyses the reaction NAD(+) + (deoxyribonucleotide)n-3'-hydroxyl + 5'-phospho-(deoxyribonucleotide)m = (deoxyribonucleotide)n+m + AMP + beta-nicotinamide D-nucleotide.. Its function is as follows. DNA ligase that catalyzes the formation of phosphodiester linkages between 5'-phosphoryl and 3'-hydroxyl groups in double-stranded DNA using NAD as a coenzyme and as the energy source for the reaction. It is essential for DNA replication and repair of damaged DNA. The protein is DNA ligase of Staphylococcus saprophyticus subsp. saprophyticus (strain ATCC 15305 / DSM 20229 / NCIMB 8711 / NCTC 7292 / S-41).